A 301-amino-acid polypeptide reads, in one-letter code: Probable alpha-L-glutamate ligase 1 (301 aa).

In terms of domain architecture, ATP-grasp spans 104–287; the sequence is LQLLSRKGIG…VTEPIVEYIE (184 aa). Residues Lys141, 178 to 179, Asp187, and 211 to 213 contribute to the ATP site; these read EY and RSN. The Mg(2+) site is built by Asp248, Glu260, and Asn262. Mn(2+) contacts are provided by Asp248, Glu260, and Asn262.

Belongs to the RimK family. Requires Mg(2+) as cofactor. Mn(2+) is required as a cofactor.

This Shewanella sp. (strain ANA-3) protein is Probable alpha-L-glutamate ligase 1.